A 244-amino-acid chain; its full sequence is Glucosamine-6-phosphate deaminase (244 aa).

Residue Asp67 is the Proton acceptor; for enolization step of the active site. The active-site For ring-opening step is the Asn133. His135 serves as the catalytic Proton acceptor; for ring-opening step. The active-site For ring-opening step is Glu140.

This sequence belongs to the glucosamine/galactosamine-6-phosphate isomerase family. NagB subfamily.

The enzyme catalyses alpha-D-glucosamine 6-phosphate + H2O = beta-D-fructose 6-phosphate + NH4(+). It participates in amino-sugar metabolism; N-acetylneuraminate degradation; D-fructose 6-phosphate from N-acetylneuraminate: step 5/5. Catalyzes the reversible isomerization-deamination of glucosamine 6-phosphate (GlcN6P) to form fructose 6-phosphate (Fru6P) and ammonium ion. This chain is Glucosamine-6-phosphate deaminase, found in Mycoplasma mycoides subsp. mycoides SC (strain CCUG 32753 / NCTC 10114 / PG1).